A 206-amino-acid chain; its full sequence is Purine nucleoside phosphorylase aq_167 (206 aa).

Positions 42, 78, and 93 each coordinate Zn(2+).

The protein belongs to the purine nucleoside phosphorylase YfiH/LACC1 family. As to quaternary structure, homodimer. The cofactor is Cu(2+). It depends on Zn(2+) as a cofactor.

The catalysed reaction is adenosine + phosphate = alpha-D-ribose 1-phosphate + adenine. It carries out the reaction S-methyl-5'-thioadenosine + phosphate = 5-(methylsulfanyl)-alpha-D-ribose 1-phosphate + adenine. It catalyses the reaction inosine + phosphate = alpha-D-ribose 1-phosphate + hypoxanthine. The enzyme catalyses adenosine + H2O + H(+) = inosine + NH4(+). Functionally, purine nucleoside enzyme that catalyzes the phosphorolysis of adenosine and inosine nucleosides, yielding D-ribose 1-phosphate and the respective free bases, adenine and hypoxanthine. Also catalyzes the phosphorolysis of S-methyl-5'-thioadenosine into adenine and S-methyl-5-thio-alpha-D-ribose 1-phosphate. Also has adenosine deaminase activity. This is Purine nucleoside phosphorylase aq_167 from Aquifex aeolicus (strain VF5).